We begin with the raw amino-acid sequence, 230 residues long: Probable methylthioribulose-1-phosphate dehydratase (230 aa).

C87 contacts substrate. Zn(2+) is bound by residues H105 and H107. E129 (proton donor/acceptor) is an active-site residue. Residue H185 participates in Zn(2+) binding.

The protein belongs to the aldolase class II family. MtnB subfamily. Zn(2+) serves as cofactor.

The protein localises to the cytoplasm. The enzyme catalyses 5-(methylsulfanyl)-D-ribulose 1-phosphate = 5-methylsulfanyl-2,3-dioxopentyl phosphate + H2O. It participates in amino-acid biosynthesis; L-methionine biosynthesis via salvage pathway; L-methionine from S-methyl-5-thio-alpha-D-ribose 1-phosphate: step 2/6. Its function is as follows. Catalyzes the dehydration of methylthioribulose-1-phosphate (MTRu-1-P) into 2,3-diketo-5-methylthiopentyl-1-phosphate (DK-MTP-1-P). The chain is Probable methylthioribulose-1-phosphate dehydratase from Drosophila virilis (Fruit fly).